The primary structure comprises 270 residues: Phosphatidylglycerol--prolipoprotein diacylglyceryl transferase (270 aa).

Transmembrane regions (helical) follow at residues 19–39, 56–76, 92–112, and 116–136; these read FPVY…LWLA, LVLI…VIFE, QGGL…VLFA, and GVSF…GQAI. Arg138 is a binding site for a 1,2-diacyl-sn-glycero-3-phospho-(1'-sn-glycerol). 3 helical membrane passes run 178–198, 206–226, and 236–256; these read HPTF…LLAL, GELF…VEGL, and LRIA…FIIV.

The protein belongs to the Lgt family.

The protein localises to the cell membrane. The catalysed reaction is L-cysteinyl-[prolipoprotein] + a 1,2-diacyl-sn-glycero-3-phospho-(1'-sn-glycerol) = an S-1,2-diacyl-sn-glyceryl-L-cysteinyl-[prolipoprotein] + sn-glycerol 1-phosphate + H(+). Its pathway is protein modification; lipoprotein biosynthesis (diacylglyceryl transfer). In terms of biological role, catalyzes the transfer of the diacylglyceryl group from phosphatidylglycerol to the sulfhydryl group of the N-terminal cysteine of a prolipoprotein, the first step in the formation of mature lipoproteins. This Bacillus cereus (strain B4264) protein is Phosphatidylglycerol--prolipoprotein diacylglyceryl transferase.